Consider the following 337-residue polypeptide: Phosphoribosylformylglycinamidine cyclo-ligase (337 aa).

Belongs to the AIR synthase family.

It is found in the cytoplasm. It carries out the reaction 2-formamido-N(1)-(5-O-phospho-beta-D-ribosyl)acetamidine + ATP = 5-amino-1-(5-phospho-beta-D-ribosyl)imidazole + ADP + phosphate + H(+). Its pathway is purine metabolism; IMP biosynthesis via de novo pathway; 5-amino-1-(5-phospho-D-ribosyl)imidazole from N(2)-formyl-N(1)-(5-phospho-D-ribosyl)glycinamide: step 2/2. The protein is Phosphoribosylformylglycinamidine cyclo-ligase of Pseudothermotoga lettingae (strain ATCC BAA-301 / DSM 14385 / NBRC 107922 / TMO) (Thermotoga lettingae).